Here is a 228-residue protein sequence, read N- to C-terminus: Urease accessory protein UreF (228 aa).

It belongs to the UreF family. As to quaternary structure, ureD, UreF and UreG form a complex that acts as a GTP-hydrolysis-dependent molecular chaperone, activating the urease apoprotein by helping to assemble the nickel containing metallocenter of UreC. The UreE protein probably delivers the nickel.

Its subcellular location is the cytoplasm. In terms of biological role, required for maturation of urease via the functional incorporation of the urease nickel metallocenter. The protein is Urease accessory protein UreF of Dechloromonas aromatica (strain RCB).